A 131-amino-acid polypeptide reads, in one-letter code: Protein ApaG (131 aa).

One can recognise an ApaG domain in the interval 3 to 127 (RAVTRQIEVT…FSLDSPDGGK (125 aa)).

This Bradyrhizobium sp. (strain BTAi1 / ATCC BAA-1182) protein is Protein ApaG.